The primary structure comprises 405 residues: Phosphoglycerate kinase (405 aa).

Substrate contacts are provided by residues 24–26, arginine 40, 63–66, arginine 122, and arginine 162; these read DFN and HLGR. ATP is bound by residues lysine 212, glutamate 331, and 361-364; that span reads GGDS.

The protein belongs to the phosphoglycerate kinase family. Monomer.

It is found in the cytoplasm. The enzyme catalyses (2R)-3-phosphoglycerate + ATP = (2R)-3-phospho-glyceroyl phosphate + ADP. The protein operates within carbohydrate degradation; glycolysis; pyruvate from D-glyceraldehyde 3-phosphate: step 2/5. This chain is Phosphoglycerate kinase, found in Corynebacterium glutamicum (strain R).